A 333-amino-acid chain; its full sequence is Mitochondrial glycine transporter (333 aa).

Solcar repeat units lie at residues 10–93 (SKST…IRQS), 125–209 (LSNT…GKKR), and 235–319 (HAAS…LIRR). 2 consecutive transmembrane segments (helical) span residues 16 to 41 (FAAG…TRVQ) and 68 to 94 (GAVP…RQSA). The segment at 98 to 126 (SPLPSSSSSTTTSSSTTTSSSSSSLPKLS) is disordered. The next 4 membrane-spanning stretches (helical) occupy residues 131-156 (LLAG…VRYE), 184-207 (GYGA…EQGK), 239-265 (INFA…KTRI), and 294-312 (GLAL…AWTV).

The protein belongs to the mitochondrial carrier (TC 2.A.29) family. SLC25A38 subfamily.

It localises to the mitochondrion inner membrane. The catalysed reaction is glycine(in) = glycine(out). In terms of biological role, mitochondrial glycine transporter that imports glycine into the mitochondrial matrix. Plays an important role in providing glycine for the first enzymatic step in heme biosynthesis, the condensation of glycine with succinyl-CoA to produce 5-aminolevulinate (ALA) in the mitochondrial matrix. The chain is Mitochondrial glycine transporter from Chaetomium globosum (strain ATCC 6205 / CBS 148.51 / DSM 1962 / NBRC 6347 / NRRL 1970) (Soil fungus).